Consider the following 950-residue polypeptide: Leucine--tRNA ligase 2 (950 aa).

Positions 47–57 match the 'HIGH' region motif; sequence PYPNSPFHLGH. Residues 631–635 carry the 'KMSKS' region motif; sequence KMSKS. K634 provides a ligand contact to ATP.

Belongs to the class-I aminoacyl-tRNA synthetase family.

Its subcellular location is the cytoplasm. The catalysed reaction is tRNA(Leu) + L-leucine + ATP = L-leucyl-tRNA(Leu) + AMP + diphosphate. In Metallosphaera sedula (strain ATCC 51363 / DSM 5348 / JCM 9185 / NBRC 15509 / TH2), this protein is Leucine--tRNA ligase 2.